Reading from the N-terminus, the 933-residue chain is Progesterone receptor (933 aa).

Residues 1–164 (MTELKAKGPR…PATQGVLSPL (164 aa)) are AF3; mediates transcriptional activation. Positions 1–256 (MTELKAKGPR…AAAGGGAAAV (256 aa)) are disordered. The tract at residues 1–566 (MTELKAKGPR…YSFESLPQKI (566 aa)) is modulating, Pro-Rich. Serine 20 is subject to Phosphoserine. The short motif at 55-59 (LDGLL) is the LXXL motif 1 element. Residue serine 81 is modified to Phosphoserine. The LXXL motif 2 motif lies at 115–119 (LDTLL). 2 positions are modified to phosphoserine: serine 130 and serine 162. Positions 165 to 305 (MSRSGCKAGD…LATTMMDFIH (141 aa)) are mediates transcriptional transrepression. A Nuclear localization signal motif is present at residues 183–187 (KVLPR). Phosphoserine is present on residues serine 190 and serine 213. Over residues 220-231 (EVEEEDGSESEE) the composition is skewed to acidic residues. The segment covering 232-246 (SAGPLLKGKPRALGG) has biased composition (low complexity). Serine 294 bears the Phosphoserine; by MAPK1 mark. The segment at 331 to 378 (GGAGAASAFAPPRSSPSASSTPVAVGDFPDCAYPPDAEPKDDAYPLYS) is disordered. The span at 335 to 350 (AASAFAPPRSSPSASS) shows a compositional bias: low complexity. A Phosphoserine; by MAPK modification is found at serine 345. Residue lysine 388 forms a Glycyl lysine isopeptide (Lys-Gly) (interchain with G-Cter in SUMO); alternate linkage. A Glycyl lysine isopeptide (Lys-Gly) (interchain with G-Cter in ubiquitin); alternate cross-link involves residue lysine 388. Serine 400 carries the phosphoserine; by CDK2 modification. Residues 415–452 (PDFPLGPPPPLPPRAPPSRPGEAAVTAAPASASVSSAS) are disordered. Residues 418–433 (PLGPPPPLPPRAPPSR) show a composition bias toward pro residues. Residues 434–452 (PGEAAVTAAPASASVSSAS) are compositionally biased toward low complexity. The tract at residues 456–546 (STLECILYKA…VYPPYLNYLR (91 aa)) is AF1; mediates transcriptional activation. Residue lysine 531 forms a Glycyl lysine isopeptide (Lys-Gly) (interchain with G-Cter in SUMO) linkage. 2 NR C4-type zinc fingers span residues 567-587 (CLICGDEASGCHYGVLTCGSC) and 603-627 (CAGRNDCIVDKIRRKNCPACRLRKC). Residues 567 to 639 (CLICGDEASG…AGMVLGGRKF (73 aa)) constitute a DNA-binding region (nuclear receptor). Position 676 is a phosphoserine (serine 676). An NR LBD domain is found at 679 to 913 (QDIQLIPPLI…EFPEMMSEVI (235 aa)). The tract at residues 687 to 933 (LINLLMSIEP…MVKPLLFHKK (247 aa)) is AF2; mediates transcriptional activation. Arginine 766 is a progesterone binding site.

It belongs to the nuclear hormone receptor family. In terms of assembly, interacts with SMARD1 and UNC45A. Interacts with CUEDC2; the interaction promotes ubiquitination, decreases sumoylation, and represses transcriptional activity. Interacts with PIAS3; the interaction promotes sumoylation of PR in a hormone-dependent manner, inhibits DNA-binding, and alters nuclear export. Interacts with SP1; the interaction requires ligand-induced phosphorylation on Ser-345 by ERK1/2-MAPK. Interacts with PRMT2. Interacts with NCOA2 and NCOA1. Interacts with KLF9. Interacts with GTF2B. Phosphorylated on multiple serine sites. Several of these sites are hormone-dependent. Phosphorylation on Ser-294 is highly hormone-dependent and modulates ubiquitination and sumoylation on Lys-388. Phosphorylation on Ser-102 and Ser-345 also requires induction by hormone. Basal phosphorylation on Ser-81, Ser-162, Ser-190 and Ser-400 is increased in response to progesterone and can be phosphorylated in vitro by the CDK2-A1 complex. Increased levels of phosphorylation on Ser-400 also in the presence of EGF, heregulin, IGF, PMA and FBS. Phosphorylation at this site by CDK2 is ligand-independent, and increases nuclear translocation and transcriptional activity. Phosphorylation at Ser-162 and Ser-294, but not at Ser-190, is impaired during the G(2)/M phase of the cell cycle. Phosphorylation on Ser-345 by ERK1/2 MAPK is required for interaction with SP1. In terms of processing, sumoylation is hormone-dependent and represses transcriptional activity. Sumoylation on all three sites is enhanced by PIAS3. Desumoylated by SENP1. Sumoylation on Lys-388, the main site of sumoylation, is repressed by ubiquitination on the same site, and modulated by phosphorylation at Ser-294. Post-translationally, ubiquitination is hormone-dependent and represses sumoylation on the same site. Promoted by MAPK-mediated phosphorylation on Ser-294. Ubiquitinated by UBR5, leading to its degradation: UBR5 specifically recognizes and binds ligand-bound PGR when it is not associated with coactivators (NCOAs). In presence of NCOAs, the UBR5-degron is not accessible, preventing its ubiquitination and degradation. Palmitoylated by ZDHHC7 and ZDHHC21. Palmitoylation is required for plasma membrane targeting and for rapid intracellular signaling via ERK and AKT kinases and cAMP generation.

Its subcellular location is the nucleus. It is found in the cytoplasm. Functionally, the steroid hormones and their receptors are involved in the regulation of eukaryotic gene expression and affect cellular proliferation and differentiation in target tissues. Transcriptional activator of several progesteron-dependent promoters in a variety of cell types. Involved in activation of SRC-dependent MAPK signaling on hormone stimulation. The polypeptide is Progesterone receptor (PGR) (Pan paniscus (Pygmy chimpanzee)).